The primary structure comprises 817 residues: Phospholipase D alpha 2 (817 aa).

The C2 domain occupies 1-130 (MAHLLLHGTL…LSGEAIERRL (130 aa)). Aspartate 192 contributes to the Ca(2+) binding site. Residues 333–372 (YMITHHQKTVIVDHDMPVPRGGGSRRIVSFVGGLDLCDGR) enclose the PLD phosphodiesterase 1 domain. Residues histidine 338, lysine 340, and aspartate 345 contribute to the active site. Residue histidine 338 coordinates a 1,2-diacyl-sn-glycero-3-phosphate. Residues histidine 378 and histidine 412 each coordinate Ca(2+). Residues glutamine 529 and histidine 668 each coordinate a 1,2-diacyl-sn-glycero-3-phosphate. Residues 663-690 (FMIYVHSKMMIVDDEYIIVGSANINQRS) enclose the PLD phosphodiesterase 2 domain. Residues histidine 668, lysine 670, and aspartate 675 contribute to the active site. Residue glutamate 730 participates in Ca(2+) binding.

Belongs to the phospholipase D family. C2-PLD subfamily. Ca(2+) is required as a cofactor.

It catalyses the reaction a 1,2-diacyl-sn-glycero-3-phosphocholine + H2O = a 1,2-diacyl-sn-glycero-3-phosphate + choline + H(+). Its function is as follows. Hydrolyzes glycerol-phospholipids at the terminal phosphodiesteric bond. Plays an important role in various cellular processes. The chain is Phospholipase D alpha 2 (PLD2) from Oryza sativa subsp. japonica (Rice).